We begin with the raw amino-acid sequence, 274 residues long: Rhamnulose-1-phosphate aldolase (274 aa).

The active site involves E117. Zn(2+)-binding residues include H141, H143, and H212.

The protein belongs to the aldolase class II family. RhaD subfamily. Homotetramer. Requires Zn(2+) as cofactor.

Its subcellular location is the cytoplasm. The catalysed reaction is L-rhamnulose 1-phosphate = (S)-lactaldehyde + dihydroxyacetone phosphate. The protein operates within carbohydrate degradation; L-rhamnose degradation; glycerone phosphate from L-rhamnose: step 3/3. Its function is as follows. Catalyzes the reversible cleavage of L-rhamnulose-1-phosphate to dihydroxyacetone phosphate (DHAP) and L-lactaldehyde. This Yersinia pestis protein is Rhamnulose-1-phosphate aldolase.